Reading from the N-terminus, the 363-residue chain is 3-isopropylmalate dehydrogenase (363 aa).

Residue 78 to 91 (GPKWEHLPPDQQPE) participates in NAD(+) binding. The substrate site is built by Arg99, Arg109, Arg138, and Asp227. Mg(2+) contacts are provided by Asp227, Asp251, and Asp255. Position 285 to 297 (285 to 297 (GSAPDIAGKNIAN)) interacts with NAD(+).

This sequence belongs to the isocitrate and isopropylmalate dehydrogenases family. LeuB type 1 subfamily. Homodimer. Mg(2+) is required as a cofactor. Requires Mn(2+) as cofactor.

Its subcellular location is the cytoplasm. The enzyme catalyses (2R,3S)-3-isopropylmalate + NAD(+) = 4-methyl-2-oxopentanoate + CO2 + NADH. It participates in amino-acid biosynthesis; L-leucine biosynthesis; L-leucine from 3-methyl-2-oxobutanoate: step 3/4. Its function is as follows. Catalyzes the oxidation of 3-carboxy-2-hydroxy-4-methylpentanoate (3-isopropylmalate) to 3-carboxy-4-methyl-2-oxopentanoate. The product decarboxylates to 4-methyl-2 oxopentanoate. In Shigella flexneri, this protein is 3-isopropylmalate dehydrogenase.